Here is an 81-residue protein sequence, read N- to C-terminus: ATP synthase subunit c, chloroplastic (81 aa).

The next 2 helical transmembrane spans lie at 7 to 27 (AASV…PGIG) and 57 to 77 (LAFM…LLFA).

This sequence belongs to the ATPase C chain family. As to quaternary structure, F-type ATPases have 2 components, F(1) - the catalytic core - and F(0) - the membrane proton channel. F(1) has five subunits: alpha(3), beta(3), gamma(1), delta(1), epsilon(1). F(0) has four main subunits: a(1), b(1), b'(1) and c(10-14). The alpha and beta chains form an alternating ring which encloses part of the gamma chain. F(1) is attached to F(0) by a central stalk formed by the gamma and epsilon chains, while a peripheral stalk is formed by the delta, b and b' chains.

It localises to the plastid. The protein resides in the chloroplast thylakoid membrane. Its function is as follows. F(1)F(0) ATP synthase produces ATP from ADP in the presence of a proton or sodium gradient. F-type ATPases consist of two structural domains, F(1) containing the extramembraneous catalytic core and F(0) containing the membrane proton channel, linked together by a central stalk and a peripheral stalk. During catalysis, ATP synthesis in the catalytic domain of F(1) is coupled via a rotary mechanism of the central stalk subunits to proton translocation. Key component of the F(0) channel; it plays a direct role in translocation across the membrane. A homomeric c-ring of between 10-14 subunits forms the central stalk rotor element with the F(1) delta and epsilon subunits. In Pelargonium hortorum (Common geranium), this protein is ATP synthase subunit c, chloroplastic.